The following is a 306-amino-acid chain: D-alanine--D-alanine ligase (306 aa).

The ATP-grasp domain occupies 104-303 (KMLWKAFGLP…FEQLVVKILE (200 aa)). 134 to 189 (VAKLGLPLMVKPSLEGSSVGLTKVKAVEELKSAVEYALKFDNTILIEEWLAGDELT) contacts ATP. Positions 257, 270, and 272 each coordinate Mg(2+).

The protein belongs to the D-alanine--D-alanine ligase family. The cofactor is Mg(2+). Mn(2+) serves as cofactor.

It localises to the cytoplasm. The catalysed reaction is 2 D-alanine + ATP = D-alanyl-D-alanine + ADP + phosphate + H(+). It functions in the pathway cell wall biogenesis; peptidoglycan biosynthesis. In terms of biological role, cell wall formation. This is D-alanine--D-alanine ligase from Haemophilus influenzae (strain PittGG).